Consider the following 467-residue polypeptide: Methionine aminopeptidase 2-1 (467 aa).

Residues 1 to 10 (MGSKSPDGHR) are compositionally biased toward basic and acidic residues. Residues 1 to 105 (MGSKSPDGHR…TPPRVSLPSI (105 aa)) are disordered. The span at 43 to 55 (DGDDEDEDGDDDG) shows a compositional bias: acidic residues. Basic residues predominate over residues 75–90 (KKRKRKSNKKKKKKTS). Residue H219 participates in substrate binding. A divalent metal cation is bound by residues D240, D251, and H320. Residue H328 coordinates substrate. A divalent metal cation is bound by residues E353 and E448.

Belongs to the peptidase M24A family. Methionine aminopeptidase eukaryotic type 2 subfamily. It depends on Co(2+) as a cofactor. Zn(2+) serves as cofactor. The cofactor is Mn(2+). Fe(2+) is required as a cofactor.

It is found in the cytoplasm. The catalysed reaction is Release of N-terminal amino acids, preferentially methionine, from peptides and arylamides.. Its function is as follows. Cotranslationally removes the N-terminal methionine from nascent proteins. The N-terminal methionine is often cleaved when the second residue in the primary sequence is small and uncharged (Met-Ala-, Cys, Gly, Pro, Ser, Thr, or Val). This chain is Methionine aminopeptidase 2-1, found in Arthroderma gypseum (strain ATCC MYA-4604 / CBS 118893) (Microsporum gypseum).